We begin with the raw amino-acid sequence, 264 residues long: uncharacterized protein (264 aa).

The first 16 residues, 1-16 (MKGKSALTLLLAGIFS), serve as a signal peptide directing secretion. Residue cysteine 17 is the site of N-palmitoyl cysteine attachment. Cysteine 17 is lipidated: S-diacylglycerol cysteine.

It localises to the cell inner membrane. This is an uncharacterized protein from Escherichia coli (strain K12).